A 335-amino-acid polypeptide reads, in one-letter code: Ketol-acid reductoisomerase (NAD(P)(+)) (335 aa).

Residues 2–182 (AKIYKDEDIS…GCARAGVIES (181 aa)) enclose the KARI N-terminal Rossmann domain. NADP(+)-binding positions include 25–28 (YGSQ), Arg49, Ser53, and 83–86 (DMVQ). His108 is a catalytic residue. Gly134 serves as a coordination point for NADP(+). Residues 183–328 (TFKEETETDL…RKLREMMFRG (146 aa)) form the KARI C-terminal knotted domain. Positions 191, 195, 227, and 231 each coordinate Mg(2+). Ser252 serves as a coordination point for substrate.

It belongs to the ketol-acid reductoisomerase family. Homodimer. Mg(2+) serves as cofactor.

The catalysed reaction is (2R)-2,3-dihydroxy-3-methylbutanoate + NAD(+) = (2S)-2-acetolactate + NADH + H(+). It catalyses the reaction (2R)-2,3-dihydroxy-3-methylbutanoate + NADP(+) = (2S)-2-acetolactate + NADPH + H(+). It participates in amino-acid biosynthesis; L-isoleucine biosynthesis; L-isoleucine from 2-oxobutanoate: step 2/4. The protein operates within amino-acid biosynthesis; L-valine biosynthesis; L-valine from pyruvate: step 2/4. Functionally, involved in the biosynthesis of branched-chain amino acids (BCAA). Catalyzes an alkyl-migration followed by a ketol-acid reduction of (S)-2-acetolactate (S2AL) to yield (R)-2,3-dihydroxy-isovalerate. In the isomerase reaction, S2AL is rearranged via a Mg-dependent methyl migration to produce 3-hydroxy-3-methyl-2-ketobutyrate (HMKB). In the reductase reaction, this 2-ketoacid undergoes a metal-dependent reduction by NADPH or NADH to yield (R)-2,3-dihydroxy-isovalerate. The sequence is that of Ketol-acid reductoisomerase (NAD(P)(+)) from Ignisphaera aggregans (strain DSM 17230 / JCM 13409 / AQ1.S1).